A 256-amino-acid polypeptide reads, in one-letter code: MILELKNISKTYPSGRRALQSISFKIEEGEILAIIGLSGAGKSTMLRCINRLVEPDEGEVIFLGEKINKLKGKKLRQYRSKIGMIFQNYNLVERLNAVENVLHGCLGSIPSYRGALGLYTEEEKEKAFALLQTVGMEEFAFQRCSELSGGQKQRIGIARALMQSPKLLLCDEPIASLDPQSSETVLNYIKEFAVNKNIACLISLHQMEAAKKYADRIIALNNGKIVFDGIPDSLNDEVLHKEIFTNVSIDSGEKSL.

Residues 3 to 247 (LELKNISKTY…VLHKEIFTNV (245 aa)) form the ABC transporter domain. 36 to 43 (GLSGAGKS) is an ATP binding site.

It belongs to the ABC transporter superfamily. Phosphonates importer (TC 3.A.1.9.1) family. As to quaternary structure, the complex is composed of two ATP-binding proteins (PhnC), two transmembrane proteins (PhnE) and a solute-binding protein (PhnD).

The protein localises to the cell inner membrane. The enzyme catalyses phosphonate(out) + ATP + H2O = phosphonate(in) + ADP + phosphate + H(+). Its function is as follows. Part of the ABC transporter complex PhnCDE involved in phosphonates import. Responsible for energy coupling to the transport system. This is Phosphonates import ATP-binding protein PhnC from Treponema denticola (strain ATCC 35405 / DSM 14222 / CIP 103919 / JCM 8153 / KCTC 15104).